The primary structure comprises 312 residues: MITFKSFHCSRGWHLWKHWRAFHSHSNSGTLFCQNRTTDKNTHATRVVDLSYDLYDGSVLGPPLVLLHGLFGSKSNFQTIARALVRKTGRKVLTLDARNHGCSPHDDIMTYPAMSADVCQILHQLQITNCVLIGHSMGGKTAMTVALQEPKLVERLVSVDISPAPTVPQTGFPHYIAAMQKVHFEEKMPRSTARRLADEQLSSTVKEASIRQFLLTNLVQENGTFKWRVNLEVISRHLQDLLDFPEFQEPYPGPVLFLGGANSPYISSENYPEIERLFPFANVEYIFGAGHWVHADKTHDFLNAICNFVESA.

Residues 1–14 (MITFKSFHCSRGWH) constitute a mitochondrion transit peptide. Residues 62–297 (PPLVLLHGLF…GAGHWVHADK (236 aa)) form the AB hydrolase-1 domain. Active-site charge relay system residues include Ser136, Glu232, and His291.

This sequence belongs to the AB hydrolase superfamily. Post-translationally, phosphorylated.

It localises to the mitochondrion. The protein resides in the mitochondrion matrix. It carries out the reaction 1-octadecanoyl-2-(5Z,8Z,11Z,14Z-eicosatetraenoyl)-sn-glycerol + H2O = 2-(5Z,8Z,11Z,14Z-eicosatetraenoyl)-glycerol + octadecanoate + H(+). The catalysed reaction is a 1,2-diacyl-sn-glycerol + H2O = a 2-acylglycerol + a fatty acid + H(+). It catalyses the reaction a 1,3-diacyl-sn-glycerol + H2O = a 1-acyl-sn-glycerol + a fatty acid + H(+). The enzyme catalyses 1-octadecanoyl-2-(9Z-octadecenoyl)-sn-glycerol + H2O = 2-(9Z-octadecenoyl)-glycerol + octadecanoate + H(+). It carries out the reaction 1-octadecanoyl-2-(4Z,7Z,10Z,13Z,16Z,19Z-docosahexaenoyl)-sn-glycerol + H2O = 2-(4Z,7Z,10Z,13Z,16Z,19Z-docosahexaenoyl)-glycerol + octadecanoate + H(+). The catalysed reaction is 1,2-didecanoylglycerol + H2O = decanoylglycerol + decanoate + H(+). Functionally, catalyzes the hydrolysis of diacylglycerol in vitro and may function as a key regulator in lipid metabolism, namely by regulating the intracellular levels of diacylglycerol. 1,2-diacyl-sn-glycerols are the preferred substrate over 1,3-diacyl-sn-glycerols. The enzyme hydrolyzes stearate in preference to palmitate from the sn-1 position of 1,2-diacyl-sn-glycerols. The protein is sn-1-specific diacylglycerol lipase ABHD11 of Xenopus laevis (African clawed frog).